The sequence spans 151 residues: Myosin light polypeptide 6 (151 aa).

The residue at position 2 (C2) is an N-acetylcysteine. In terms of domain architecture, EF-hand 1 spans 7–42 (DQTAEFKEAFQLFDRTGDGKILYSQCGDVMRALGQN). Phosphoserine is present on S57. K81 is subject to N6-acetyllysine. An EF-hand 2 domain is found at 84–119 (GTYEDYVEGLRVFDKEGNGTVMGAEIRHVLVTLGEK).

In terms of assembly, myosin is a hexamer of 2 heavy chains and 4 light chains. Interacts with SPATA6.

In terms of biological role, regulatory light chain of myosin. Does not bind calcium. The sequence is that of Myosin light polypeptide 6 (MYL6) from Bos taurus (Bovine).